A 363-amino-acid polypeptide reads, in one-letter code: Pyrimidine monooxygenase RutA (363 aa).

FMN is bound by residues 49 to 50, Asn-115, Glu-124, 140 to 141, and Ser-190; these read IK and RY.

This sequence belongs to the NtaA/SnaA/DszA monooxygenase family. RutA subfamily.

The catalysed reaction is uracil + FMNH2 + NADH + O2 = (Z)-3-ureidoacrylate + FMN + NAD(+) + H2O + H(+). It catalyses the reaction thymine + FMNH2 + NADH + O2 = (Z)-2-methylureidoacrylate + FMN + NAD(+) + H2O + H(+). Catalyzes the pyrimidine ring opening between N-3 and C-4 by an unusual flavin hydroperoxide-catalyzed mechanism, adding oxygen atoms in the process to yield ureidoacrylate peracid, that immediately reacts with FMN forming ureidoacrylate and FMN-N(5)-oxide. The FMN-N(5)-oxide reacts spontaneously with NADH to produce FMN. Requires the flavin reductase RutF to regenerate FMN in vivo. In Escherichia coli (strain SMS-3-5 / SECEC), this protein is Pyrimidine monooxygenase RutA.